Reading from the N-terminus, the 210-residue chain is Thymidylate kinase (210 aa).

Position 10 to 17 (10 to 17 (GLEGAGKS)) interacts with ATP.

It belongs to the thymidylate kinase family.

The enzyme catalyses dTMP + ATP = dTDP + ADP. Functionally, phosphorylation of dTMP to form dTDP in both de novo and salvage pathways of dTTP synthesis. This is Thymidylate kinase from Hamiltonella defensa subsp. Acyrthosiphon pisum (strain 5AT).